Consider the following 885-residue polypeptide: Leucine--tRNA ligase (885 aa).

The short motif at 48–58 (PYPSGKLHMGH) is the 'HIGH' region element. Positions 639–643 (TMSKS) match the 'KMSKS' region motif. Residue lysine 642 participates in ATP binding.

Belongs to the class-I aminoacyl-tRNA synthetase family.

The protein localises to the cytoplasm. It catalyses the reaction tRNA(Leu) + L-leucine + ATP = L-leucyl-tRNA(Leu) + AMP + diphosphate. The chain is Leucine--tRNA ligase from Bordetella parapertussis (strain 12822 / ATCC BAA-587 / NCTC 13253).